We begin with the raw amino-acid sequence, 513 residues long: ATP synthase subunit alpha (513 aa).

Position 169 to 176 (glycine 169 to threonine 176) interacts with ATP.

It belongs to the ATPase alpha/beta chains family. F-type ATPases have 2 components, CF(1) - the catalytic core - and CF(0) - the membrane proton channel. CF(1) has five subunits: alpha(3), beta(3), gamma(1), delta(1), epsilon(1). CF(0) has three main subunits: a(1), b(2) and c(9-12). The alpha and beta chains form an alternating ring which encloses part of the gamma chain. CF(1) is attached to CF(0) by a central stalk formed by the gamma and epsilon chains, while a peripheral stalk is formed by the delta and b chains.

The protein localises to the cell inner membrane. It catalyses the reaction ATP + H2O + 4 H(+)(in) = ADP + phosphate + 5 H(+)(out). Produces ATP from ADP in the presence of a proton gradient across the membrane. The alpha chain is a regulatory subunit. In Burkholderia vietnamiensis (strain G4 / LMG 22486) (Burkholderia cepacia (strain R1808)), this protein is ATP synthase subunit alpha.